A 413-amino-acid polypeptide reads, in one-letter code: Tryptophan synthase beta chain (413 aa).

Lysine 107 is subject to N6-(pyridoxal phosphate)lysine.

This sequence belongs to the TrpB family. As to quaternary structure, tetramer of two alpha and two beta chains. Pyridoxal 5'-phosphate is required as a cofactor.

The catalysed reaction is (1S,2R)-1-C-(indol-3-yl)glycerol 3-phosphate + L-serine = D-glyceraldehyde 3-phosphate + L-tryptophan + H2O. It participates in amino-acid biosynthesis; L-tryptophan biosynthesis; L-tryptophan from chorismate: step 5/5. Its function is as follows. The beta subunit is responsible for the synthesis of L-tryptophan from indole and L-serine. This Trichormus variabilis (strain ATCC 29413 / PCC 7937) (Anabaena variabilis) protein is Tryptophan synthase beta chain.